The following is a 419-amino-acid chain: Protein FAM217A (419 aa).

Disordered regions lie at residues 1-23 (MGRK…QENL), 100-119 (DKRN…LSES), 234-298 (PSSS…SRSL), and 362-388 (PIPL…HRKS). The segment covering 7 to 23 (ESCSANPHSSSISQENL) has biased composition (polar residues). The segment covering 284–298 (SLSTAGKSKSNSRSL) has biased composition (polar residues). Over residues 378 to 388 (PRTKKKCHRKS) the composition is skewed to basic residues.

The protein belongs to the FAM217 family.

This chain is Protein FAM217A (Fam217a), found in Rattus norvegicus (Rat).